The sequence spans 487 residues: Glutamyl-tRNA(Gln) amidotransferase subunit A (487 aa).

Active-site charge relay system residues include lysine 78 and serine 153. The active-site Acyl-ester intermediate is serine 177.

It belongs to the amidase family. GatA subfamily. Heterotrimer of A, B and C subunits.

The catalysed reaction is L-glutamyl-tRNA(Gln) + L-glutamine + ATP + H2O = L-glutaminyl-tRNA(Gln) + L-glutamate + ADP + phosphate + H(+). Its function is as follows. Allows the formation of correctly charged Gln-tRNA(Gln) through the transamidation of misacylated Glu-tRNA(Gln) in organisms which lack glutaminyl-tRNA synthetase. The reaction takes place in the presence of glutamine and ATP through an activated gamma-phospho-Glu-tRNA(Gln). The polypeptide is Glutamyl-tRNA(Gln) amidotransferase subunit A (Oleidesulfovibrio alaskensis (strain ATCC BAA-1058 / DSM 17464 / G20) (Desulfovibrio alaskensis)).